A 121-amino-acid polypeptide reads, in one-letter code: MKLCITSLKNQKEFELINKLGEKFYERYFILVIAKKLPKIFLESKYNTFLGIKVSRKLNKKAVVRNKIKRRIRHLMRIIVNDSNFKAIKFAIIIIPKKGFEEINFSHLQYELSKIILRNIY.

This sequence belongs to the RnpA family. As to quaternary structure, consists of a catalytic RNA component (M1 or rnpB) and a protein subunit.

The catalysed reaction is Endonucleolytic cleavage of RNA, removing 5'-extranucleotides from tRNA precursor.. RNaseP catalyzes the removal of the 5'-leader sequence from pre-tRNA to produce the mature 5'-terminus. It can also cleave other RNA substrates such as 4.5S RNA. The protein component plays an auxiliary but essential role in vivo by binding to the 5'-leader sequence and broadening the substrate specificity of the ribozyme. This is Ribonuclease P protein component from Rickettsia prowazekii (strain Madrid E).